The following is a 212-amino-acid chain: Thymidylate kinase (212 aa).

10–17 (GPEGAGKT) lines the ATP pocket.

It belongs to the thymidylate kinase family.

It carries out the reaction dTMP + ATP = dTDP + ADP. Functionally, phosphorylation of dTMP to form dTDP in both de novo and salvage pathways of dTTP synthesis. In Bacillus pumilus (strain SAFR-032), this protein is Thymidylate kinase.